Reading from the N-terminus, the 338-residue chain is MISTMIPSRGLIEEAFPGFAVSALVAATAQFLSDHYGAPAMLLALLLGLALNFLAEDGTRTAPGIAFTARTVLRLGVALLGARISAGMLAALGPGAIALVVAGVVLTILFALAASRLVGRGWRFALLTGGSVAICGASAAMAIAAVLPRYEKSERDLVFTVLSVTVLSTVAMVLYPMLAGLFGFTARDSGVFLGGTIHDVAQVVGAGFSIGPETGETATLVKLIRVSMLAPVVLCFSLAIRARGLADADGGKAPPLLPGFVIGFLALAGLNSLGLIPQGVSDFAGQVSRWALLIAIAAVGIKTSLGKMLEVGTGAIALILAETVFLAVFVTAGLHLLG.

Helical transmembrane passes span 36 to 55 (YGAP…NFLA), 75 to 92 (LGVA…LAAL), 96 to 118 (AIAL…SRLV), 125 to 147 (ALLT…AAVL), 162 to 184 (LSVT…LFGF), 223 to 245 (LIRV…ARGL), 255 to 277 (PLLP…GLIP), 290 to 309 (WALL…GKML), and 314 to 336 (GAIA…GLHL).

Belongs to the UPF0324 family.

The protein localises to the cell membrane. The protein is UPF0324 membrane protein TauZ (tauZ) of Paracoccus pantotrophus (Thiosphaera pantotropha).